The chain runs to 134 residues: uncharacterized protein (134 aa).

The N-terminal stretch at 1–23 (MWHLRCSNWRGSGVFGMCFSLSG) is a signal peptide. Residue Cys24 is the site of N-palmitoyl cysteine attachment. A lipid anchor (S-diacylglycerol cysteine) is attached at Cys24.

Its subcellular location is the cell membrane. This is an uncharacterized protein from Treponema pallidum (strain Nichols).